The primary structure comprises 359 residues: Aminomethyltransferase (359 aa).

It belongs to the GcvT family. As to quaternary structure, the glycine cleavage system is composed of four proteins: P, T, L and H.

It carries out the reaction N(6)-[(R)-S(8)-aminomethyldihydrolipoyl]-L-lysyl-[protein] + (6S)-5,6,7,8-tetrahydrofolate = N(6)-[(R)-dihydrolipoyl]-L-lysyl-[protein] + (6R)-5,10-methylene-5,6,7,8-tetrahydrofolate + NH4(+). Its function is as follows. The glycine cleavage system catalyzes the degradation of glycine. The polypeptide is Aminomethyltransferase (Idiomarina loihiensis (strain ATCC BAA-735 / DSM 15497 / L2-TR)).